We begin with the raw amino-acid sequence, 356 residues long: S-adenosylmethionine:tRNA ribosyltransferase-isomerase (356 aa).

This sequence belongs to the QueA family. Monomer.

Its subcellular location is the cytoplasm. The enzyme catalyses 7-aminomethyl-7-carbaguanosine(34) in tRNA + S-adenosyl-L-methionine = epoxyqueuosine(34) in tRNA + adenine + L-methionine + 2 H(+). It participates in tRNA modification; tRNA-queuosine biosynthesis. Functionally, transfers and isomerizes the ribose moiety from AdoMet to the 7-aminomethyl group of 7-deazaguanine (preQ1-tRNA) to give epoxyqueuosine (oQ-tRNA). The chain is S-adenosylmethionine:tRNA ribosyltransferase-isomerase from Shigella boydii serotype 4 (strain Sb227).